We begin with the raw amino-acid sequence, 364 residues long: Phosphoserine aminotransferase (364 aa).

L-glutamate is bound at residue Arg-41. Pyridoxal 5'-phosphate is bound by residues 75-76 (AS), Trp-100, Thr-155, Asp-175, and Gln-198. At Lys-199 the chain carries N6-(pyridoxal phosphate)lysine. 239–240 (NT) provides a ligand contact to pyridoxal 5'-phosphate.

The protein belongs to the class-V pyridoxal-phosphate-dependent aminotransferase family. SerC subfamily. Homodimer. The cofactor is pyridoxal 5'-phosphate.

The protein localises to the cytoplasm. The enzyme catalyses O-phospho-L-serine + 2-oxoglutarate = 3-phosphooxypyruvate + L-glutamate. It catalyses the reaction 4-(phosphooxy)-L-threonine + 2-oxoglutarate = (R)-3-hydroxy-2-oxo-4-phosphooxybutanoate + L-glutamate. It functions in the pathway amino-acid biosynthesis; L-serine biosynthesis; L-serine from 3-phospho-D-glycerate: step 2/3. Functionally, catalyzes the reversible conversion of 3-phosphohydroxypyruvate to phosphoserine and of 3-hydroxy-2-oxo-4-phosphonooxybutanoate to phosphohydroxythreonine. The sequence is that of Phosphoserine aminotransferase from Streptococcus uberis (strain ATCC BAA-854 / 0140J).